Reading from the N-terminus, the 119-residue chain is Large ribosomal subunit protein bL20 (119 aa).

Belongs to the bacterial ribosomal protein bL20 family.

Its function is as follows. Binds directly to 23S ribosomal RNA and is necessary for the in vitro assembly process of the 50S ribosomal subunit. It is not involved in the protein synthesizing functions of that subunit. This chain is Large ribosomal subunit protein bL20, found in Streptococcus pyogenes serotype M1.